A 384-amino-acid chain; its full sequence is Probable L-tyrosine/L-aspartate decarboxylase (384 aa).

Lys233 is subject to N6-(pyridoxal phosphate)lysine.

The protein belongs to the group II decarboxylase family. MfnA subfamily. The cofactor is pyridoxal 5'-phosphate.

The enzyme catalyses L-tyrosine + H(+) = tyramine + CO2. It carries out the reaction L-aspartate + H(+) = beta-alanine + CO2. Its pathway is cofactor biosynthesis; methanofuran biosynthesis. The protein operates within cofactor biosynthesis; coenzyme A biosynthesis. Catalyzes the decarboxylation of L-tyrosine to produce tyramine for methanofuran biosynthesis. Can also catalyze the decarboxylation of L-aspartate to produce beta-alanine for coenzyme A (CoA) biosynthesis. This chain is Probable L-tyrosine/L-aspartate decarboxylase, found in Methanococcus maripaludis (strain C5 / ATCC BAA-1333).